Consider the following 504-residue polypeptide: Glycerol kinase (504 aa).

Thr14 provides a ligand contact to ADP. ATP contacts are provided by Thr14, Thr15, and Ser16. Thr14 is a sn-glycerol 3-phosphate binding site. Arg18 serves as a coordination point for ADP. 4 residues coordinate sn-glycerol 3-phosphate: Arg84, Glu85, Tyr136, and Asp246. Glycerol-binding residues include Arg84, Glu85, Tyr136, Asp246, and Gln247. Residues Thr268 and Gly311 each contribute to the ADP site. Positions 268, 311, 315, and 412 each coordinate ATP. Gly412 and Asn416 together coordinate ADP.

It belongs to the FGGY kinase family.

It carries out the reaction glycerol + ATP = sn-glycerol 3-phosphate + ADP + H(+). Its pathway is polyol metabolism; glycerol degradation via glycerol kinase pathway; sn-glycerol 3-phosphate from glycerol: step 1/1. Inhibited by fructose 1,6-bisphosphate (FBP). In terms of biological role, key enzyme in the regulation of glycerol uptake and metabolism. Catalyzes the phosphorylation of glycerol to yield sn-glycerol 3-phosphate. In Aliivibrio fischeri (strain MJ11) (Vibrio fischeri), this protein is Glycerol kinase.